We begin with the raw amino-acid sequence, 309 residues long: Formimidoylglutamase (309 aa).

Residues His120, Asp145, His147, Asp149, Asp236, and Asp238 each coordinate Mn(2+).

This sequence belongs to the arginase family. Mn(2+) is required as a cofactor.

It catalyses the reaction N-formimidoyl-L-glutamate + H2O = formamide + L-glutamate. Its pathway is amino-acid degradation; L-histidine degradation into L-glutamate; L-glutamate from N-formimidoyl-L-glutamate (hydrolase route): step 1/1. Catalyzes the conversion of N-formimidoyl-L-glutamate to L-glutamate and formamide. This chain is Formimidoylglutamase, found in Chromobacterium violaceum (strain ATCC 12472 / DSM 30191 / JCM 1249 / CCUG 213 / NBRC 12614 / NCIMB 9131 / NCTC 9757 / MK).